The following is a 414-amino-acid chain: S-adenosylmethionine synthase (414 aa).

Histidine 11 provides a ligand contact to ATP. Aspartate 13 provides a ligand contact to Mg(2+). Glutamate 39 is a K(+) binding site. L-methionine is bound by residues glutamate 52 and glutamine 95. The flexible loop stretch occupies residues 95 to 105 (QSPDIAQGVNM). Residues 169–171 (DGK), 245–246 (KF), aspartate 254, 260–261 (RK), alanine 277, and lysine 281 each bind ATP. Aspartate 254 lines the L-methionine pocket. Lysine 285 lines the L-methionine pocket.

This sequence belongs to the AdoMet synthase family. As to quaternary structure, homotetramer; dimer of dimers. Mg(2+) is required as a cofactor. The cofactor is K(+).

It localises to the cytoplasm. The catalysed reaction is L-methionine + ATP + H2O = S-adenosyl-L-methionine + phosphate + diphosphate. It participates in amino-acid biosynthesis; S-adenosyl-L-methionine biosynthesis; S-adenosyl-L-methionine from L-methionine: step 1/1. Catalyzes the formation of S-adenosylmethionine (AdoMet) from methionine and ATP. The overall synthetic reaction is composed of two sequential steps, AdoMet formation and the subsequent tripolyphosphate hydrolysis which occurs prior to release of AdoMet from the enzyme. This chain is S-adenosylmethionine synthase, found in Synechococcus sp. (strain JA-2-3B'a(2-13)) (Cyanobacteria bacterium Yellowstone B-Prime).